We begin with the raw amino-acid sequence, 538 residues long: Bifunctional purine biosynthesis protein PurH (538 aa).

An MGS-like domain is found at 8–158; sequence IPAPDKVEIK…KNHAYVTILT (151 aa).

The protein belongs to the PurH family.

It catalyses the reaction (6R)-10-formyltetrahydrofolate + 5-amino-1-(5-phospho-beta-D-ribosyl)imidazole-4-carboxamide = 5-formamido-1-(5-phospho-D-ribosyl)imidazole-4-carboxamide + (6S)-5,6,7,8-tetrahydrofolate. It carries out the reaction IMP + H2O = 5-formamido-1-(5-phospho-D-ribosyl)imidazole-4-carboxamide. Its pathway is purine metabolism; IMP biosynthesis via de novo pathway; 5-formamido-1-(5-phospho-D-ribosyl)imidazole-4-carboxamide from 5-amino-1-(5-phospho-D-ribosyl)imidazole-4-carboxamide (10-formyl THF route): step 1/1. It participates in purine metabolism; IMP biosynthesis via de novo pathway; IMP from 5-formamido-1-(5-phospho-D-ribosyl)imidazole-4-carboxamide: step 1/1. The polypeptide is Bifunctional purine biosynthesis protein PurH (Rhizobium etli (strain CIAT 652)).